The sequence spans 652 residues: Replication protein E1 (652 aa).

The Nuclear localization signal signature appears at 86–88 (KRK). Residue Ser92 is modified to Phosphoserine; by host. The segment at 153–173 (NNTNGEEEGENGGENGGSIRE) is disordered. The tract at residues 188-354 (DPQSPTAQLK…LTVIQHGIDD (167 aa)) is DNA-binding region. The 151-residue stretch at 453-603 (VEFITFLCAF…FPFDQNRNPV (151 aa)) folds into the SF3 helicase domain. 479–486 (GPPNTGKS) lines the ATP pocket. A Glycyl lysine isopeptide (Lys-Gly) (interchain with G-Cter in SUMO) cross-link involves residue Lys560.

The protein belongs to the papillomaviridae E1 protein family. In terms of assembly, can form hexamers. Interacts with E2 protein; this interaction increases E1 DNA binding specificity. Interacts with host DNA polymerase subunit POLA2. Interacts with host single stranded DNA-binding protein RPA1. Interacts with host TOP1; this interaction stimulates the enzymatic activity of TOP1. Phosphorylated. In terms of processing, sumoylated.

The protein localises to the host nucleus. The enzyme catalyses Couples ATP hydrolysis with the unwinding of duplex DNA by translocating in the 3'-5' direction.. The catalysed reaction is ATP + H2O = ADP + phosphate + H(+). Functionally, ATP-dependent DNA 3'-5' helicase required for initiation of viral DNA replication. It forms a complex with the viral E2 protein. The E1-E2 complex binds to the replication origin which contains binding sites for both proteins. During the initial step, a dimer of E1 interacts with a dimer of protein E2 leading to a complex that binds the viral origin of replication with high specificity. Then, a second dimer of E1 displaces the E2 dimer in an ATP-dependent manner to form the E1 tetramer. Following this, two E1 monomers are added to each half of the site, which results in the formation of two E1 trimers on the viral ori. Subsequently, two hexamers will be created. The double hexamer acts as a bi-directional helicase machinery and unwinds the viral DNA and then recruits the host DNA polymerase to start replication. In Human papillomavirus type 70, this protein is Replication protein E1.